The primary structure comprises 271 residues: tRNA pseudouridine synthase A (271 aa).

The Nucleophile role is filled by Asp52. Tyr110 contributes to the substrate binding site.

The protein belongs to the tRNA pseudouridine synthase TruA family. Homodimer.

The catalysed reaction is uridine(38/39/40) in tRNA = pseudouridine(38/39/40) in tRNA. In terms of biological role, formation of pseudouridine at positions 38, 39 and 40 in the anticodon stem and loop of transfer RNAs. The sequence is that of tRNA pseudouridine synthase A from Burkholderia mallei (strain NCTC 10247).